Here is a 308-residue protein sequence, read N- to C-terminus: Glutaminase (308 aa).

Residues serine 66, asparagine 117, glutamate 161, asparagine 168, tyrosine 192, tyrosine 244, and valine 262 each contribute to the substrate site.

The protein belongs to the glutaminase family. As to quaternary structure, homotetramer.

The catalysed reaction is L-glutamine + H2O = L-glutamate + NH4(+). This is Glutaminase from Photorhabdus laumondii subsp. laumondii (strain DSM 15139 / CIP 105565 / TT01) (Photorhabdus luminescens subsp. laumondii).